The primary structure comprises 477 residues: Beta-agarase D (477 aa).

The N-terminal stretch at 1 to 20 (MKRSILLAIIAFLQFFTSYG) is a signal peptide. The GH16 domain maps to 22–378 (YDWDNVPIPA…WIRVYKPVNA (357 aa)). Substrate-binding positions include 94–104 (MQNHVAVSGGN), 123–125 (NNT), E174, E179, R206, and E340. The active-site Nucleophile is E174. Residue E179 is the Proton donor of the active site. Over residues 382-391 (NSAETTSTVE) the composition is skewed to low complexity. Residues 382–402 (NSAETTSTVEKPASFEPQGQP) form a disordered region.

It belongs to the glycosyl hydrolase 16 family.

It is found in the secreted. It catalyses the reaction Hydrolysis of (1-&gt;4)-beta-D-galactosidic linkages in agarose, giving the tetramer as the predominant product.. In terms of biological role, cleaves the beta-1,4-linkages between beta-D-galactose and alpha-L-3,6-anhydro-galactose residues in agarose. Cleaves agarose in a random manner with retention of the anomeric-bond configuration, producing beta-anomers that give rise progressively to alpha-anomers when mutarotation takes place. Requires at least 4 consecutive agarose units and is highly intolerant to modifications. This chain is Beta-agarase D (agaD), found in Zobellia galactanivorans (strain DSM 12802 / CCUG 47099 / CIP 106680 / NCIMB 13871 / Dsij).